Reading from the N-terminus, the 60-residue chain is Large ribosomal subunit protein uL30 (60 aa).

Belongs to the universal ribosomal protein uL30 family. In terms of assembly, part of the 50S ribosomal subunit.

This is Large ribosomal subunit protein uL30 from Xanthobacter autotrophicus (strain ATCC BAA-1158 / Py2).